The sequence spans 115 residues: Large ribosomal subunit protein uL22c (115 aa).

The protein belongs to the universal ribosomal protein uL22 family. Part of the 50S ribosomal subunit.

It localises to the plastid. The protein resides in the chloroplast. Functionally, this protein binds specifically to 23S rRNA. The globular domain of the protein is located near the polypeptide exit tunnel on the outside of the subunit, while an extended beta-hairpin is found that lines the wall of the exit tunnel in the center of the 70S ribosome. In Thalassiosira pseudonana (Marine diatom), this protein is Large ribosomal subunit protein uL22c (rpl22).